A 205-amino-acid polypeptide reads, in one-letter code: Purine catabolism protein PucB (205 aa).

Its pathway is purine metabolism; hypoxanthine degradation. Its function is as follows. Required for xanthine dehydrogenase activity. Could be involved in formation of the molybdenum cofactor required by xanthine dehydrogenase. In Bacillus subtilis (strain 168), this protein is Purine catabolism protein PucB (pucB).